The primary structure comprises 120 residues: Peptidyl-tRNA hydrolase (120 aa).

This sequence belongs to the PTH2 family.

The protein localises to the cytoplasm. It catalyses the reaction an N-acyl-L-alpha-aminoacyl-tRNA + H2O = an N-acyl-L-amino acid + a tRNA + H(+). The natural substrate for this enzyme may be peptidyl-tRNAs which drop off the ribosome during protein synthesis. The chain is Peptidyl-tRNA hydrolase from Sulfolobus acidocaldarius (strain ATCC 33909 / DSM 639 / JCM 8929 / NBRC 15157 / NCIMB 11770).